Reading from the N-terminus, the 274-residue chain is NH(3)-dependent NAD(+) synthetase (274 aa).

46 to 53 (GISGGQDS) serves as a coordination point for ATP. D52 provides a ligand contact to Mg(2+). R140 contacts deamido-NAD(+). Residue T160 participates in ATP binding. Residue E165 participates in Mg(2+) binding. The deamido-NAD(+) site is built by K173 and D180. 2 residues coordinate ATP: K189 and T211. 260-261 (HK) serves as a coordination point for deamido-NAD(+).

This sequence belongs to the NAD synthetase family. Homodimer.

The catalysed reaction is deamido-NAD(+) + NH4(+) + ATP = AMP + diphosphate + NAD(+) + H(+). It participates in cofactor biosynthesis; NAD(+) biosynthesis; NAD(+) from deamido-NAD(+) (ammonia route): step 1/1. Functionally, catalyzes the ATP-dependent amidation of deamido-NAD to form NAD. Uses ammonia as a nitrogen source. The chain is NH(3)-dependent NAD(+) synthetase from Rhodococcus erythropolis (strain PR4 / NBRC 100887).